The following is an 822-amino-acid chain: Probable alpha,alpha-trehalose-phosphate synthase [UDP-forming] 2 (822 aa).

The segment at 12 to 479 (PRLLVVANRL…GLDFMSELNG (468 aa)) is glycosyltransferase.

This sequence in the N-terminal section; belongs to the glycosyltransferase 20 family. The protein in the C-terminal section; belongs to the trehalose phosphatase family.

It catalyses the reaction D-glucose 6-phosphate + UDP-alpha-D-glucose = alpha,alpha-trehalose 6-phosphate + UDP + H(+). This is Probable alpha,alpha-trehalose-phosphate synthase [UDP-forming] 2 (TPS2) from Arabidopsis thaliana (Mouse-ear cress).